Here is an 87-residue protein sequence, read N- to C-terminus: Small ribosomal subunit protein bS20 (87 aa).

The protein belongs to the bacterial ribosomal protein bS20 family.

Its function is as follows. Binds directly to 16S ribosomal RNA. The chain is Small ribosomal subunit protein bS20 from Clostridium botulinum (strain Eklund 17B / Type B).